The sequence spans 190 residues: Putative 3-methyladenine DNA glycosylase (190 aa).

Belongs to the DNA glycosylase MPG family.

This chain is Putative 3-methyladenine DNA glycosylase, found in Rubrobacter xylanophilus (strain DSM 9941 / JCM 11954 / NBRC 16129 / PRD-1).